The chain runs to 450 residues: Citrate/malate-proton symporter (450 aa).

The Cytoplasmic portion of the chain corresponds to 1–32 (MGELQTHMQLQTDTIHEGVRKENWFAKAMNIK). A helical transmembrane segment spans residues 33 to 53 (VGIIPLPVYALLFILITVFVM). Residues 54 to 64 (HHDVKSDILTS) lie on the Extracellular side of the membrane. Residues 65–85 (IAVMAFFGFTFAQIGKSIPIV) traverse the membrane as a helical segment. Residues 86-87 (RS) are Cytoplasmic-facing. A helical membrane pass occupies residues 88–108 (IGGPAILATFIPSAVVYYHLL). At 109-118 (PNDIVKSTTE) the chain is on the extracellular side. A helical membrane pass occupies residues 119-139 (FTENSNFLYLFIAGIVVGSIL). Topologically, residues 140–152 (GMKRETLVKAFMK) are cytoplasmic. Residues 153-173 (IFIPLIVGSVTAAIVGLAVGT) traverse the membrane as a helical segment. Topologically, residues 174–217 (LLGLGFQHTLLYIVIPIMAGGVGEGAIPLSIGYSDIMPISQGEA) are extracellular. Residues 218 to 238 (FALVLPSIMLGSLCAIILAGL) traverse the membrane as a helical segment. Topologically, residues 239–273 (LNRIGKKKPEWTGNGKVDRSEEESPALEESQSGQQ) are cytoplasmic. The segment at 249-268 (WTGNGKVDRSEEESPALEES) is disordered. A helical membrane pass occupies residues 274 to 294 (MFNLSLFASGGILAVSLYLVG). Residue M295 is a topological domain, extracellular. A helical membrane pass occupies residues 296 to 316 (LAHDFFGFPAPVAMLLLAVLI). The Cytoplasmic segment spans residues 317 to 335 (KLFRLVPASIENGAFGVSR). Residues 336-356 (FFSTAVTYPLLFAIGVSMTPW) traverse the membrane as a helical segment. The Extracellular segment spans residues 357–364 (DKLVAAFN). Residues 365–385 (LSNIITILSVVVTMMAVGFFT) traverse the membrane as a helical segment. At 386 to 428 (GKWLNMYPIETAIINACHSGQGGTGDVAILSAAERLELMPFAQ) the chain is on the cytoplasmic side. Residues 429–446 (VSTRIGGAITVSLTLLLL) form a helical membrane-spanning segment. Topologically, residues 447-450 (HQFY) are extracellular.

The protein belongs to the 2-hydroxycarboxylate transporter (2-HCT) (TC 2.A.24) family.

The protein resides in the cell membrane. It carries out the reaction citrate(in) + 3 H(+)(in) = citrate(out) + 3 H(+)(out). The enzyme catalyses (S)-malate(in) + 2 H(+)(in) = (S)-malate(out) + 2 H(+)(out). Its activity is regulated as follows. The uptake activity is inhibited by divalent metal ions such as Ca(2+), Mg(2+) and Ni(2+). Functionally, proton motive force-driven secondary transporter that catalyzes the uptake of both citrate and malate. Is an electroneutral proton-solute symporter: the number of protons transported is equal to the valence of the transported anions. Translocates the free citrate and malate anions. Citramalate binds to the transporter, but it is not translocated. Is strictly stereoselective, recognizing only the (S)-enantiomers of malate and citramalate. In Bacillus subtilis (strain 168), this protein is Citrate/malate-proton symporter.